Reading from the N-terminus, the 304-residue chain is Homoserine O-acetyltransferase (304 aa).

The Acyl-thioester intermediate role is filled by C142. The substrate site is built by K163 and S191. H234 (proton acceptor) is an active-site residue. The active site involves E236. R248 is a binding site for substrate.

The protein belongs to the MetA family.

The protein resides in the cytoplasm. It catalyses the reaction L-homoserine + acetyl-CoA = O-acetyl-L-homoserine + CoA. The protein operates within amino-acid biosynthesis; L-methionine biosynthesis via de novo pathway; O-acetyl-L-homoserine from L-homoserine: step 1/1. Its function is as follows. Transfers an acetyl group from acetyl-CoA to L-homoserine, forming acetyl-L-homoserine. This chain is Homoserine O-acetyltransferase, found in Thermotoga neapolitana (strain ATCC 49049 / DSM 4359 / NBRC 107923 / NS-E).